Reading from the N-terminus, the 479-residue chain is Glutamyl-tRNA(Gln) amidotransferase subunit A (479 aa).

Residues lysine 75 and serine 150 each act as charge relay system in the active site. The Acyl-ester intermediate role is filled by serine 174.

It belongs to the amidase family. GatA subfamily. As to quaternary structure, heterotrimer of A, B and C subunits.

It catalyses the reaction L-glutamyl-tRNA(Gln) + L-glutamine + ATP + H2O = L-glutaminyl-tRNA(Gln) + L-glutamate + ADP + phosphate + H(+). Its function is as follows. Allows the formation of correctly charged Gln-tRNA(Gln) through the transamidation of misacylated Glu-tRNA(Gln) in organisms which lack glutaminyl-tRNA synthetase. The reaction takes place in the presence of glutamine and ATP through an activated gamma-phospho-Glu-tRNA(Gln). This chain is Glutamyl-tRNA(Gln) amidotransferase subunit A, found in Synechococcus sp. (strain ATCC 27144 / PCC 6301 / SAUG 1402/1) (Anacystis nidulans).